Consider the following 384-residue polypeptide: UPF0496 protein At3g28310/At3g28320 (384 aa).

Residues 184–215 (QESLFDRVTETKERIAKEIEEVQKRISNVNTA) adopt a coiled-coil conformation. Transmembrane regions (helical) follow at residues 217 to 237 (IVSHVVFGAAAFGYAAGCIAL) and 242 to 262 (VGAPLGAGMVTLLPVIVVQWV). Residues 264–361 (VNYVLNNSLE…TTKITEVCET (98 aa)) adopt a coiled-coil conformation.

This sequence belongs to the UPF0496 family.

Its subcellular location is the membrane. This is UPF0496 protein At3g28310/At3g28320 from Arabidopsis thaliana (Mouse-ear cress).